Consider the following 456-residue polypeptide: Exodeoxyribonuclease 7 large subunit (456 aa).

The protein belongs to the XseA family. Heterooligomer composed of large and small subunits.

It localises to the cytoplasm. The enzyme catalyses Exonucleolytic cleavage in either 5'- to 3'- or 3'- to 5'-direction to yield nucleoside 5'-phosphates.. Its function is as follows. Bidirectionally degrades single-stranded DNA into large acid-insoluble oligonucleotides, which are then degraded further into small acid-soluble oligonucleotides. In Shigella boydii serotype 4 (strain Sb227), this protein is Exodeoxyribonuclease 7 large subunit.